Reading from the N-terminus, the 580-residue chain is Glutathione hydrolase proenzyme (580 aa).

Positions 1-25 (MIKPTFLRRVAIAALLSGSCFSAAA) are cleaved as a signal peptide. Arg-114 is an L-glutamate binding site. Thr-391 acts as the Nucleophile in catalysis. L-glutamate contacts are provided by residues Thr-409, Asn-411, Gln-430, Asp-433, 462–463 (SS), and 483–484 (GG). Residues 561–580 (DGELYGASDPRSVDDLTAGY) are disordered.

The protein belongs to the gamma-glutamyltransferase family. As to quaternary structure, this enzyme consists of two polypeptide chains, which are synthesized in precursor form from a single polypeptide. Post-translationally, cleaved by autocatalysis into a large and a small subunit.

Its subcellular location is the periplasm. The enzyme catalyses an N-terminal (5-L-glutamyl)-[peptide] + an alpha-amino acid = 5-L-glutamyl amino acid + an N-terminal L-alpha-aminoacyl-[peptide]. It carries out the reaction glutathione + H2O = L-cysteinylglycine + L-glutamate. It catalyses the reaction an S-substituted glutathione + H2O = an S-substituted L-cysteinylglycine + L-glutamate. It participates in sulfur metabolism; glutathione metabolism. With respect to regulation, transferase and hydrolase activities are inhibited by L-Ala and L-Gln, and also by GGT affinity labeling reagents such as azaserine and 6-diazo-5-oxo-nor-leucine. Functionally, cleaves the gamma-glutamyl bond of periplasmic glutathione (gamma-Glu-Cys-Gly), glutathione conjugates, and other gamma-glutamyl compounds. The metabolism of glutathione releases free glutamate and the dipeptide cysteinyl-glycine, which is hydrolyzed to cysteine and glycine by dipeptidases; it may function in amino acid uptake/salvage, or possibly in peptidoglycan linkage. Catalyzes the hydrolysis and transpeptidation of many gamma-glutamyl compounds (including some D-gamma-glutamyl substrates), with a preference for basic and aromatic amino acids as acceptors. The KM values for gamma-glutamyl acceptors are so high that it has been proposed transpeptidation is not the physiological role in E.coli. The polypeptide is Glutathione hydrolase proenzyme (ggt) (Escherichia coli (strain K12)).